Here is a 291-residue protein sequence, read N- to C-terminus: MFSGSIPALVTPFRDGAFDEKLFRGFVDWQIAEGSSALVPCGTTGESATMSIEEHNHVVRVCIEQAQGRVPVIAGCGSNDTAVALEHMKAAQAAGADAALVVLPYYNRPNQDGLIAHFRHLTDNCTLPIIVYNVPARTVTDILPETLGALAGIKTIVGIKDASGKVERVSAQRQHCGPDFCQLSGNDDMALGFMAMGGVGCISVTANVAPGLCAEFQTACADGRWADALALQDKLFPLHAALFSDASPGPVKYALTRTYRDFPADLRLPMTWPSEASRAAVDAALAHAGIA.

Pyruvate is bound at residue threonine 44. Tyrosine 132 functions as the Proton donor/acceptor in the catalytic mechanism. Lysine 160 serves as the catalytic Schiff-base intermediate with substrate. Isoleucine 202 lines the pyruvate pocket.

Belongs to the DapA family. As to quaternary structure, homotetramer; dimer of dimers.

It is found in the cytoplasm. The catalysed reaction is L-aspartate 4-semialdehyde + pyruvate = (2S,4S)-4-hydroxy-2,3,4,5-tetrahydrodipicolinate + H2O + H(+). It participates in amino-acid biosynthesis; L-lysine biosynthesis via DAP pathway; (S)-tetrahydrodipicolinate from L-aspartate: step 3/4. In terms of biological role, catalyzes the condensation of (S)-aspartate-beta-semialdehyde [(S)-ASA] and pyruvate to 4-hydroxy-tetrahydrodipicolinate (HTPA). This Rhizorhabdus wittichii (strain DSM 6014 / CCUG 31198 / JCM 15750 / NBRC 105917 / EY 4224 / RW1) (Sphingomonas wittichii) protein is 4-hydroxy-tetrahydrodipicolinate synthase.